The sequence spans 426 residues: Pannexin-1 (426 aa).

The Cytoplasmic segment spans residues 1–40 (MAIAHLATEYVFSDFLLKEPTEPKFKGLRLELAVDKMVTC). Cys-40 bears the S-nitrosocysteine mark. A helical transmembrane segment spans residues 41-61 (IAVGLPLLLISLAFAQEISIG). Residues 62-106 (TQISCFSPSSFSWRQAAFVDSYCWAAVQQKNSLQSESGNLPLWLH) lie on the Extracellular side of the membrane. 2 disulfide bridges follow: Cys-66-Cys-264 and Cys-84-Cys-245. A helical transmembrane segment spans residues 107–127 (KFFPYILLLFAILLYLPALFW). Over 128–216 (RFAAAPHLCS…HLIMKYISCR (89 aa)) the chain is Cytoplasmic. Phosphotyrosine is present on Tyr-198. The helical transmembrane segment at 217–237 (LVTFAVVLLACIYLSYYFSLS) threads the bilayer. At 238–277 (SLSDEFLCSIKSGVLRNDSTIPDSFQCKLIAVGIFQLLSL) the chain is on the extracellular side. Asn-254 carries N-linked (GlcNAc...) asparagine glycosylation. Residues 278-298 (INLLVYALLVPVVIYTLFVPF) form a helical membrane-spanning segment. At 299–426 (RQKTDVLKVY…SRQRLLNSSC (128 aa)) the chain is on the cytoplasmic side. Cys-346 is modified (S-nitrosocysteine). Positions 407 to 426 (ETAANNGEKNSRQRLLNSSC) are disordered.

Belongs to the pannexin family. Homoheptameric. S-nitrosylation inhibits channel currents and ATP release. In terms of processing, N-glycosylation plays a role in cell surface targeting. Glycosylation at its extracellular surface makes unlikely that two oligomers could dock to form an intercellular channel such as in gap junctions. Exists in three glycosylation states: non-glycosylated (GLY0), high-mannose glycosylated (GLY1), and fully mature glycosylated (GLY2). Post-translationally, cleaved by CASP3 and CASP7 during apoptosis. Cleavage opens the channel for the release of metabolites and induces plasma membrane permeability during apoptosis. Phosphorylated at Tyr-198 by SRC. Phosphorylation activates ATP release. Constitutively phosphorylated in vascular smooth muscle cells. Expressed in the eye, thyroid, prostate, kidney and liver. Abundantly expressed in the CNS, including hippocampus, olfactory bulb, cortex, cerebellum and white matter.

The protein localises to the cell membrane. It is found in the endoplasmic reticulum membrane. It catalyses the reaction Ca(2+)(in) = Ca(2+)(out). The catalysed reaction is ATP(in) = ATP(out). It carries out the reaction K(+)(in) = K(+)(out). The enzyme catalyses chloride(in) = chloride(out). It catalyses the reaction iodide(out) = iodide(in). The catalysed reaction is Na(+)(in) = Na(+)(out). It carries out the reaction nitrate(in) = nitrate(out). The enzyme catalyses L-aspartate(out) = L-aspartate(in). It catalyses the reaction L-glutamate(out) = L-glutamate(in). The catalysed reaction is D-gluconate(in) = D-gluconate(out). It carries out the reaction spermidine(in) = spermidine(out). Its function is as follows. Ion channel involved in a variety of physiological functions such as blood pressure regulation, apoptotic cell clearance and oogenesis. Forms anion-selective channels with relatively low conductance and an order of permeabilities: nitrate&gt;iodide&gt;chlroride&gt;&gt;aspartate=glutamate=gluconate. Can release ATP upon activation through phosphorylation or cleavage at C-terminus. May play a role as a Ca(2+)-leak channel to regulate ER Ca(2+) homeostasis. During apoptosis, the C terminal tail is cleaved by caspases, which opens the main pore acting as a large-pore ATP efflux channel with a broad distribution, which allows the regulated release of molecules and ions smaller than 1 kDa, such as nucleotides ATP and UTP, and selective plasma membrane permeability to attract phagocytes that engulf the dying cells. The polypeptide is Pannexin-1 (Panx1) (Rattus norvegicus (Rat)).